Reading from the N-terminus, the 121-residue chain is Dihydroneopterin aldolase (121 aa).

Substrate contacts are provided by residues Glu-22, Tyr-54, and 73 to 74 (LE). Catalysis depends on Lys-100, which acts as the Proton donor/acceptor.

This sequence belongs to the DHNA family. In terms of assembly, homooctamer. Four molecules assemble into a ring, and two rings come together to give a cylinder with a hole of at least 13 a diameter.

It carries out the reaction 7,8-dihydroneopterin = 6-hydroxymethyl-7,8-dihydropterin + glycolaldehyde. The enzyme catalyses 7,8-dihydroneopterin = 7,8-dihydromonapterin. The protein operates within cofactor biosynthesis; tetrahydrofolate biosynthesis; 2-amino-4-hydroxy-6-hydroxymethyl-7,8-dihydropteridine diphosphate from 7,8-dihydroneopterin triphosphate: step 3/4. Its function is as follows. Catalyzes the conversion of 7,8-dihydroneopterin to 6-hydroxymethyl-7,8-dihydropterin. Can also catalyze the epimerization of carbon 2' of dihydroneopterin to dihydromonapterin. The chain is Dihydroneopterin aldolase (folB) from Staphylococcus aureus (strain COL).